The sequence spans 267 residues: tRNA pseudouridine synthase A (267 aa).

The active-site Nucleophile is the aspartate 51. Tyrosine 109 provides a ligand contact to substrate.

It belongs to the tRNA pseudouridine synthase TruA family. In terms of assembly, homodimer.

It catalyses the reaction uridine(38/39/40) in tRNA = pseudouridine(38/39/40) in tRNA. Its function is as follows. Formation of pseudouridine at positions 38, 39 and 40 in the anticodon stem and loop of transfer RNAs. In Staphylococcus epidermidis (strain ATCC 35984 / DSM 28319 / BCRC 17069 / CCUG 31568 / BM 3577 / RP62A), this protein is tRNA pseudouridine synthase A.